Here is a 224-residue protein sequence, read N- to C-terminus: Ribose-5-phosphate isomerase A (224 aa).

Substrate-binding positions include 32–35 (TGST), 85–88 (DGAD), and 98–101 (KGGG). Glu-107 (proton acceptor) is an active-site residue. Substrate is bound at residue Lys-125.

It belongs to the ribose 5-phosphate isomerase family. In terms of assembly, homodimer.

The catalysed reaction is aldehydo-D-ribose 5-phosphate = D-ribulose 5-phosphate. It participates in carbohydrate degradation; pentose phosphate pathway; D-ribose 5-phosphate from D-ribulose 5-phosphate (non-oxidative stage): step 1/1. Functionally, catalyzes the reversible conversion of ribose-5-phosphate to ribulose 5-phosphate. This Pseudomonas entomophila (strain L48) protein is Ribose-5-phosphate isomerase A.